The sequence spans 207 residues: Large ribosomal subunit protein uL4 (207 aa).

Residues 48 to 75 are disordered; that stretch reads THAVKNRSAVSGGGRKPWKQKGTGRARA.

The protein belongs to the universal ribosomal protein uL4 family. Part of the 50S ribosomal subunit.

Its function is as follows. One of the primary rRNA binding proteins, this protein initially binds near the 5'-end of the 23S rRNA. It is important during the early stages of 50S assembly. It makes multiple contacts with different domains of the 23S rRNA in the assembled 50S subunit and ribosome. In terms of biological role, forms part of the polypeptide exit tunnel. This is Large ribosomal subunit protein uL4 from Leuconostoc citreum (strain KM20).